We begin with the raw amino-acid sequence, 260 residues long: Proteasome subunit alpha (260 aa).

The span at 237 to 248 (ASTDAPAAAADS) shows a compositional bias: low complexity. Positions 237-260 (ASTDAPAAAADSADVEERPDSEAP) are disordered. Basic and acidic residues predominate over residues 251 to 260 (VEERPDSEAP).

Belongs to the peptidase T1A family. The 20S proteasome core is composed of 14 alpha and 14 beta subunits that assemble into four stacked heptameric rings, resulting in a barrel-shaped structure. The two inner rings, each composed of seven catalytic beta subunits, are sandwiched by two outer rings, each composed of seven alpha subunits. The catalytic chamber with the active sites is on the inside of the barrel. Has a gated structure, the ends of the cylinder being occluded by the N-termini of the alpha-subunits. Is capped by the proteasome-associated ATPase, ARC.

The protein resides in the cytoplasm. Its pathway is protein degradation; proteasomal Pup-dependent pathway. Its activity is regulated as follows. The formation of the proteasomal ATPase ARC-20S proteasome complex, likely via the docking of the C-termini of ARC into the intersubunit pockets in the alpha-rings, may trigger opening of the gate for substrate entry. Interconversion between the open-gate and close-gate conformations leads to a dynamic regulation of the 20S proteasome proteolysis activity. Component of the proteasome core, a large protease complex with broad specificity involved in protein degradation. The polypeptide is Proteasome subunit alpha (Salinispora tropica (strain ATCC BAA-916 / DSM 44818 / JCM 13857 / NBRC 105044 / CNB-440)).